The chain runs to 144 residues: Superoxide dismutase [Mn], mitochondrial (144 aa).

Histidine 10, histidine 58, and aspartate 143 together coordinate Mn(2+).

This sequence belongs to the iron/manganese superoxide dismutase family. Homotetramer. It depends on Mn(2+) as a cofactor.

The protein resides in the mitochondrion matrix. The enzyme catalyses 2 superoxide + 2 H(+) = H2O2 + O2. Destroys superoxide anion radicals which are normally produced within the cells and which are toxic to biological systems. The chain is Superoxide dismutase [Mn], mitochondrial from Branchiostoma floridae (Florida lancelet).